Here is a 133-residue protein sequence, read N- to C-terminus: Small ribosomal subunit protein uS8 (133 aa).

Residues 1–30 (MANHDPISDMLTRIRNASEKRHETTKVPAS) are disordered. Over residues 16-25 (NASEKRHETT) the composition is skewed to basic and acidic residues.

Belongs to the universal ribosomal protein uS8 family. Part of the 30S ribosomal subunit. Contacts proteins S5 and S12.

In terms of biological role, one of the primary rRNA binding proteins, it binds directly to 16S rRNA central domain where it helps coordinate assembly of the platform of the 30S subunit. The protein is Small ribosomal subunit protein uS8 of Synechococcus sp. (strain CC9902).